A 112-amino-acid chain; its full sequence is Ribosome-binding factor A (112 aa).

The protein belongs to the RbfA family. As to quaternary structure, monomer. Binds 30S ribosomal subunits, but not 50S ribosomal subunits or 70S ribosomes.

The protein resides in the cytoplasm. Functionally, one of several proteins that assist in the late maturation steps of the functional core of the 30S ribosomal subunit. Associates with free 30S ribosomal subunits (but not with 30S subunits that are part of 70S ribosomes or polysomes). Required for efficient processing of 16S rRNA. May interact with the 5'-terminal helix region of 16S rRNA. The protein is Ribosome-binding factor A of Mycoplasmopsis pulmonis (strain UAB CTIP) (Mycoplasma pulmonis).